A 145-amino-acid polypeptide reads, in one-letter code: Flagellar assembly factor FliW (145 aa).

This sequence belongs to the FliW family. In terms of assembly, interacts with translational regulator CsrA and flagellin(s).

It localises to the cytoplasm. Acts as an anti-CsrA protein, binds CsrA and prevents it from repressing translation of its target genes, one of which is flagellin. Binds to flagellin and participates in the assembly of the flagellum. The chain is Flagellar assembly factor FliW from Thermosipho africanus (strain TCF52B).